A 35-amino-acid chain; its full sequence is Coatomer subunit alpha (35 aa).

As to quaternary structure, oligomeric complex that consists of at least the alpha, beta, beta', gamma, delta, epsilon and zeta subunits. Interacts with SCYL1. Interacts with JAGN1. Interacts with TMEM41B. Interacts with SVEP1. Probably interacts with PEX11A. In terms of tissue distribution, gastric, duodenal and jejunal mucosa. Circulates in the blood. Seems to be confined to specific endocrine cells.

Functionally, xenin stimulates exocrine pancreatic secretion. It inhibits pentagastrin-stimulated secretion of acid, to induce exocrine pancreatic secretion and to affect small and large intestinal motility. In the gut, xenin interacts with the neurotensin receptor. The sequence is that of Coatomer subunit alpha (COPA) from Canis lupus familiaris (Dog).